The primary structure comprises 876 residues: MAPHSLKKNYRCSRSLKQFYGGGPFIVSSDGSFIACACGDVINIVDSTDSSVKSTIEGESDTLTALALSPDDKLLFSAGHSRQIRVWDLETLKCIRSWKGHEGPVMGMACHASGGLLATAGADRKVLVWDVDGGFCTHYFRGHKGVVSSILFHPDSNKNILISGSDDATVRVWDLNAKNTEKKCLAIMEKHFSAVTSIALSEDGLTLFSAGRDKVVNLWDLHDYSCKATVATYEVLEAVTTVSSGTPFASFVASLDQKKSKKKESDSQATYFITVGERGVVRIWKSEGSICLYEQKSSDITVSSDDEESKRGFTAAAMLPSDHGLLCVTADQQFFFYSVVENVEETELVLSKRLVGYNEEIADMKFLGDEEQFLAVATNLEEVRVYDVATMSCSYVLAGHKEVVLSLDTCVSSSGNVLIVTGSKDKTVRLWNATSKSCIGVGTGHNGDILAVAFAKKSFSFFVSGSGDRTLKVWSLDGISEDSEEPINLKTRSVVAAHDKDINSVAVARNDSLVCTGSEDRTASIWRLPDLVHVVTLKGHKRRIFSVEFSTVDQCVMTASGDKTVKIWAISDGSCLKTFEGHTSSVLRASFITDGTQFVSCGADGLLKLWNVNTSECIATYDQHEDKVWALAVGKKTEMIATGGGDAVINLWHDSTASDKEDDFRKEEEAILRGQELENAVLDAEYTKAIRLAFELCRPHKVFELFSGLCRKRDSDEQIVKALQGLEKEEFRLLFEYVREWNTKPKLCHIAQFVLYKTFNILPPTEIVQVKGIGELLEGLIPYSQRHFSRIDRFVRSSFLLDYTLGEMSVIDPETVETEYPKDEKKKEKDVIAAMEQDTDELKQETPSRKRKSQKSKGKSNKKRLIAEAQGSVIAV.

WD repeat units lie at residues 58–97 (GESD…CIRS), 100–139 (GHEG…CTHY), 142–183 (GHKG…TEKK), 190–229 (KHFS…CKAT), 255–294 (LDQK…CLYE), 308–347 (ESKR…EETE), 356–396 (GYNE…CSYV), 399–441 (GHKE…CIGV), 444–484 (GHNG…EDSE), 497–536 (AHDK…HVVT), 539–580 (GHKR…KTFE), 581–620 (GHTS…CIAT), and 623–662 (QHED…DKED). A disordered region spans residues 816-876 (VETEYPKDEK…AEAQGSVIAV (61 aa)). The segment covering 819-831 (EYPKDEKKKEKDV) has biased composition (basic and acidic residues). Positions 848 to 855 (SRKRKSQK) match the Nuclear localization signal motif. The span at 849 to 864 (RKRKSQKSKGKSNKKR) shows a compositional bias: basic residues.

In terms of tissue distribution, preferentially expressed in dividing cells in a variety of tissues and meristematic regions.

It localises to the nucleus. Its subcellular location is the nucleolus. Functionally, essential protein involved in the regulation of cell division planes during embryogenesis which defines cell patterning, especially longitudinal division planes of the proembryo, probably via the regulation of embryo patterning genes expression patterns. This is Protein TORMOZ EMBRYO DEFECTIVE from Arabidopsis thaliana (Mouse-ear cress).